Consider the following 146-residue polypeptide: Hemoglobin subunit beta (146 aa).

Positions 2–146 constitute a Globin domain; sequence HWSAEEKQLI…VAHALARKYH (145 aa). Heme b is bound by residues His-63 and His-92.

It belongs to the globin family. As to quaternary structure, heterotetramer of two alpha chains and two beta chains. Red blood cells.

In terms of biological role, involved in oxygen transport from the lung to the various peripheral tissues. This chain is Hemoglobin subunit beta (HBB), found in Anseranas semipalmata (Magpie goose).